Here is a 476-residue protein sequence, read N- to C-terminus: 3-isopropylmalate dehydratase large subunit (476 aa).

Residues Cys353, Cys413, and Cys416 each contribute to the [4Fe-4S] cluster site.

It belongs to the aconitase/IPM isomerase family. LeuC type 1 subfamily. Heterodimer of LeuC and LeuD. [4Fe-4S] cluster is required as a cofactor.

It carries out the reaction (2R,3S)-3-isopropylmalate = (2S)-2-isopropylmalate. Its pathway is amino-acid biosynthesis; L-leucine biosynthesis; L-leucine from 3-methyl-2-oxobutanoate: step 2/4. Catalyzes the isomerization between 2-isopropylmalate and 3-isopropylmalate, via the formation of 2-isopropylmaleate. The protein is 3-isopropylmalate dehydratase large subunit of Yersinia pseudotuberculosis serotype O:1b (strain IP 31758).